We begin with the raw amino-acid sequence, 109 residues long: Sperm-specific class P protein 9/11 (109 aa).

Residues 2–109 (SLTADPPACT…TVTIPMSATA (108 aa)) form the MSP domain.

Expressed at higher level in testis.

This chain is Sperm-specific class P protein 9/11 (ssp-9), found in Caenorhabditis elegans.